The chain runs to 440 residues: Tetratricopeptide repeat protein 5 (440 aa).

5 TPR repeats span residues 7–61 (EEVK…EEVV), 68–98 (AQVLMLTGKALNVTPDYSPKAEELLSKAVKL), 103–130 (VEAWNQLGEVYWKKGDVAAAHTCFSGAL), 136–174 (KVSLQNLSMVLRQLRTDTEDEHSHHVMDSVRQAKLAVQM), and 179–216 (GRSWYILGNSYLSLYFSTGQNPKISQQALSAYAQAEKV). Residues 13–24 (LQKLQELVDQLY) carry the Nuclear export signal motif. Ser-203 is modified (phosphoserine; by ATM). Ser-221 bears the Phosphoserine; by CHEK2 mark. Residues 224–253 (PDLHLNRATLHKYEESYGEALEGFSRAAAL) form a TPR 6 repeat. Positions 285 to 287 (KTK) are mediates interaction with 28S rRNA of ribosome-coding tubulin.

As to quaternary structure, interacts with JMY and p300/EP300; the interaction occurs in the nucleus and augments the association between JMY and p300/EP300 in response to DNA damage. Forms a complex with HSF1 and p300/EP300; these interactions augment chromatin-bound HSF1 and p300/EP300 histone acetyltransferase activity, resulting in enhanced heat-shock-responsive transcription. Interacts with PRMT5; the interaction is DNA damage-dependent and promotes PRMT5 interaction with p53/TP53 and subsequent methylation. Interacts with JMY; the interaction occurs in the cytoplasm and results in the inhibition of JYM's nucleation activity. Interacts with ribosome-coding tubulin (via 60S subunit 28S rRNA and protein uL24/RPL26) and the N-terminal of nascent tubulin polypeptide (via alpha-tubulin MREC motif and beta-tubulin MREI motif); these interactions result in tubulin mRNA-targeted degradation. Interacts with ATP5F1B; the interaction occurs in the mitochondria and results in ATP production decrease. Interacts with p53/TP53; the interaction occurs in the mitochondria and results in increased apoptosis. Post-translationally, phosphorylation by ATM kinase induces nuclear accumulation while interfering with nuclear export, and phosphorylation by CHEK2 kinase enhances nuclear stability.

Its subcellular location is the nucleus. It localises to the cytoplasm. It is found in the cytoplasmic vesicle. The protein resides in the mitochondrion matrix. Cofactor involved in the regulation of various cellular mechanisms such as actin regulation, autophagy, chromatin regulation and DNA repair. In non-stress conditions, interacts with cofactor JMY in the cytoplasm which prevents JMY's actin nucleation activity and ability to activate the Arp2/3 complex. Acts as a negative regulator of nutrient stress-induced autophagy by preventing JMY's interaction with MAP1LC3B, thereby preventing autophagosome formation. Involves in tubulin autoregulation by promoting its degradation in response to excess soluble tubulin. To do so, associates with the active ribosome near the ribosome exit tunnel and with nascent tubulin polypeptides early during their translation, triggering tubulin mRNA-targeted degradation. Following DNA damage, phosphorylated by DNA damage responsive protein kinases ATM and CHEK2, leading to its nuclear accumulation and stability. Nuclear TTC5/STRAP promotes the assembly of a stress-responsive p53/TP53 coactivator complex, which includes the coactivators JMY and p300, thereby increasing p53/TP53-dependent transcription and apoptosis. Also recruits arginine methyltransferase PRMT5 to p53/TP53 when DNA is damaged, allowing PRMT5 to methylate p53/TP53. In DNA stress conditions, also prevents p53/TP53 degradation by E3 ubiquitin ligase MDM2. Upon heat-shock stress, forms a chromatin-associated complex with heat-shock factor 1 HSF1 and p300/EP300 to stimulate heat-shock-responsive transcription, thereby increasing cell survival. Mitochondrial TTC5/STRAP interacts with ATP synthase subunit beta ATP5F1B which decreased ATP synthase activity and lowers mitochondrial ATP production, thereby regulating cellular respiration and mitochondrial-dependent apoptosis. Mitochondrial TTC5/STRAP also regulates p53/TP53-mediated apoptosis. In Homo sapiens (Human), this protein is Tetratricopeptide repeat protein 5.